The following is a 142-amino-acid chain: Rhinocerosin (142 aa).

The signal sequence occupies residues 1 to 16 (MMKLYIVFGFIAFSAA). The propeptide occupies 17-70 (YVVPEGYYEPEYYPADGYESERVARASPAELIFDEDLADEPEVEEPQYYIRTRR). The tract at residues 72-96 (LQPGAPNFPMPGSQLPTSITSNIEK) is disordered. The span at 85 to 96 (QLPTSITSNIEK) shows a compositional bias: polar residues.

It belongs to the coleoptericin family. As to expression, strongly expressed in the fat body and the Malpighian tubules, and weakly expressed in hemocytes and midgut.

It is found in the secreted. Has strong antibacterial activity against E.coli, Streptococcus pyogenes, Staphylococcus aureus but not against Pseudomonas aeruginosa. This chain is Rhinocerosin, found in Oryctes rhinoceros (Coconut rhinoceros beetle).